The sequence spans 368 residues: 3-dehydroquinate synthase (368 aa).

NAD(+)-binding positions include 131 to 132 (TT), lysine 144, and lysine 153. Zn(2+) is bound by residues glutamate 186, histidine 249, and histidine 267.

This sequence belongs to the sugar phosphate cyclases superfamily. Dehydroquinate synthase family. Co(2+) is required as a cofactor. Requires Zn(2+) as cofactor. It depends on NAD(+) as a cofactor.

The protein localises to the cytoplasm. The catalysed reaction is 7-phospho-2-dehydro-3-deoxy-D-arabino-heptonate = 3-dehydroquinate + phosphate. Its pathway is metabolic intermediate biosynthesis; chorismate biosynthesis; chorismate from D-erythrose 4-phosphate and phosphoenolpyruvate: step 2/7. In terms of biological role, catalyzes the conversion of 3-deoxy-D-arabino-heptulosonate 7-phosphate (DAHP) to dehydroquinate (DHQ). In Pelagibacter ubique (strain HTCC1062), this protein is 3-dehydroquinate synthase.